The chain runs to 281 residues: Pantothenate synthetase (281 aa).

30-37 (MGALHHGH) provides a ligand contact to ATP. The Proton donor role is filled by His37. Gln61 lines the (R)-pantoate pocket. Gln61 provides a ligand contact to beta-alanine. 147 to 150 (GEKD) is a binding site for ATP. Gln153 contributes to the (R)-pantoate binding site. ATP contacts are provided by residues Leu176 and 184–187 (SSSR).

It belongs to the pantothenate synthetase family. Homodimer.

The protein localises to the cytoplasm. The catalysed reaction is (R)-pantoate + beta-alanine + ATP = (R)-pantothenate + AMP + diphosphate + H(+). The protein operates within cofactor biosynthesis; (R)-pantothenate biosynthesis; (R)-pantothenate from (R)-pantoate and beta-alanine: step 1/1. Its function is as follows. Catalyzes the condensation of pantoate with beta-alanine in an ATP-dependent reaction via a pantoyl-adenylate intermediate. The polypeptide is Pantothenate synthetase (Bartonella bacilliformis (strain ATCC 35685 / KC583 / Herrer 020/F12,63)).